Consider the following 440-residue polypeptide: Thymidine phosphorylase (440 aa).

The protein belongs to the thymidine/pyrimidine-nucleoside phosphorylase family. In terms of assembly, homodimer.

It carries out the reaction thymidine + phosphate = 2-deoxy-alpha-D-ribose 1-phosphate + thymine. The protein operates within pyrimidine metabolism; dTMP biosynthesis via salvage pathway; dTMP from thymine: step 1/2. Its function is as follows. The enzymes which catalyze the reversible phosphorolysis of pyrimidine nucleosides are involved in the degradation of these compounds and in their utilization as carbon and energy sources, or in the rescue of pyrimidine bases for nucleotide synthesis. This is Thymidine phosphorylase from Cronobacter sakazakii (strain ATCC BAA-894) (Enterobacter sakazakii).